The following is a 644-amino-acid chain: Threonine--tRNA ligase (644 aa).

In terms of domain architecture, TGS spans 8 to 70 (VKAMVITLRD…EEDGELEILT (63 aa)). The tract at residues 251–541 (DHRKLGKELD…LTEHFAGAFP (291 aa)) is catalytic. Residues Cys342, His393, and His518 each coordinate Zn(2+).

Belongs to the class-II aminoacyl-tRNA synthetase family. As to quaternary structure, homodimer. The cofactor is Zn(2+).

The protein localises to the cytoplasm. The catalysed reaction is tRNA(Thr) + L-threonine + ATP = L-threonyl-tRNA(Thr) + AMP + diphosphate + H(+). Functionally, catalyzes the attachment of threonine to tRNA(Thr) in a two-step reaction: L-threonine is first activated by ATP to form Thr-AMP and then transferred to the acceptor end of tRNA(Thr). Also edits incorrectly charged L-seryl-tRNA(Thr). This is Threonine--tRNA ligase from Caldanaerobacter subterraneus subsp. tengcongensis (strain DSM 15242 / JCM 11007 / NBRC 100824 / MB4) (Thermoanaerobacter tengcongensis).